Reading from the N-terminus, the 877-residue chain is Phosphoenolpyruvate carboxylase (877 aa).

Catalysis depends on residues His-138 and Lys-544.

It belongs to the PEPCase type 1 family. Requires Mg(2+) as cofactor.

It catalyses the reaction oxaloacetate + phosphate = phosphoenolpyruvate + hydrogencarbonate. Functionally, forms oxaloacetate, a four-carbon dicarboxylic acid source for the tricarboxylic acid cycle. This Vibrio vulnificus (strain YJ016) protein is Phosphoenolpyruvate carboxylase.